Here is a 425-residue protein sequence, read N- to C-terminus: Pyruvate dehydrogenase E1 component subunit alpha-3, chloroplastic (425 aa).

The transit peptide at 1-66 directs the protein to the chloroplast; it reads MAAASSFTAA…VLPGNKAAPA (66 aa). His-109, Tyr-135, Arg-136, Ala-184, Ile-186, Asp-224, Gly-225, and Asn-253 together coordinate pyruvate. Thiamine diphosphate-binding residues include Tyr-135, Arg-136, Ala-184, Ile-186, Asp-224, Gly-225, Asn-253, and His-322. Asp-224 contacts Mg(2+). Asn-253 serves as a coordination point for Mg(2+).

In terms of assembly, tetramer of 2 alpha and 2 beta subunits. It depends on thiamine diphosphate as a cofactor. The cofactor is Mg(2+).

The protein localises to the plastid. It localises to the chloroplast. The catalysed reaction is N(6)-[(R)-lipoyl]-L-lysyl-[protein] + pyruvate + H(+) = N(6)-[(R)-S(8)-acetyldihydrolipoyl]-L-lysyl-[protein] + CO2. In terms of biological role, the pyruvate dehydrogenase complex catalyzes the overall conversion of pyruvate to acetyl-CoA and CO(2). It contains multiple copies of three enzymatic components: pyruvate dehydrogenase (E1), dihydrolipoamide acetyltransferase (E2) and lipoamide dehydrogenase (E3). The chain is Pyruvate dehydrogenase E1 component subunit alpha-3, chloroplastic from Oryza sativa subsp. japonica (Rice).